The following is a 487-amino-acid chain: V-type proton ATPase subunit B2 (487 aa).

G2 is modified (N-acetylglycine).

This sequence belongs to the ATPase alpha/beta chains family. As to quaternary structure, V-ATPase is a heteromultimeric enzyme composed of a peripheral catalytic V1 complex (components A to H) attached to an integral membrane V0 proton pore complex (components: a, c, c'', d and e).

Its subcellular location is the vacuole membrane. Functionally, non-catalytic subunit of the peripheral V1 complex of vacuolar ATPase. V-ATPase is responsible for acidifying a variety of intracellular compartments in eukaryotic cells. This chain is V-type proton ATPase subunit B2 (VHA-B2), found in Arabidopsis thaliana (Mouse-ear cress).